The following is a 309-amino-acid chain: Probable lipid kinase YegS-like (309 aa).

The DAGKc domain occupies 1-134 (MAPSHWRLIL…IDLLRIDADH (134 aa)). ATP contacts are provided by residues Thr-39, 65–71 (GDGTLSE), and Thr-96. Residues Leu-219, Asp-222, and Leu-224 each contribute to the Mg(2+) site. Catalysis depends on Glu-280, which acts as the Proton acceptor.

This sequence belongs to the diacylglycerol/lipid kinase family. YegS lipid kinase subfamily. It depends on Mg(2+) as a cofactor. Requires Ca(2+) as cofactor.

The protein resides in the cytoplasm. In terms of biological role, probably phosphorylates lipids; the in vivo substrate is unknown. In Xanthomonas campestris pv. campestris (strain 8004), this protein is Probable lipid kinase YegS-like.